The sequence spans 594 residues: Glutamate decarboxylase 1 (594 aa).

Over residues 1–13 (MASSTPSSSATSS) the composition is skewed to low complexity. Residues 1–22 (MASSTPSSSATSSNAGADPNTA) are disordered. Position 78 is a phosphoserine (S78). Residue 190–192 (QLS) participates in 4-aminobutanoate binding. An N6-(pyridoxal phosphate)lysine modification is found at K405. Position 567 (R567) interacts with 4-aminobutanoate.

Belongs to the group II decarboxylase family. In terms of assembly, homodimer. Requires pyridoxal 5'-phosphate as cofactor.

It catalyses the reaction L-glutamate + H(+) = 4-aminobutanoate + CO2. Functionally, catalyzes the synthesis of the inhibitory neurotransmitter gamma-aminobutyric acid (GABA) with pyridoxal 5'-phosphate as cofactor. The chain is Glutamate decarboxylase 1 (GAD1) from Canis lupus familiaris (Dog).